The sequence spans 398 residues: tRNA-specific 2-thiouridylase MnmA (398 aa).

ATP-binding positions include 19–26 and leucine 45; that span reads AMSGGVDS. The active-site Nucleophile is the cysteine 113. An intrachain disulfide couples cysteine 113 to cysteine 210. Glycine 137 is an ATP binding site. Residues 160 to 162 are interaction with tRNA; it reads RDQ. Residue cysteine 210 is the Cysteine persulfide intermediate of the active site.

The protein belongs to the MnmA/TRMU family.

It localises to the cytoplasm. It carries out the reaction S-sulfanyl-L-cysteinyl-[protein] + uridine(34) in tRNA + AH2 + ATP = 2-thiouridine(34) in tRNA + L-cysteinyl-[protein] + A + AMP + diphosphate + H(+). Catalyzes the 2-thiolation of uridine at the wobble position (U34) of tRNA, leading to the formation of s(2)U34. The polypeptide is tRNA-specific 2-thiouridylase MnmA (Rhodopseudomonas palustris (strain BisB5)).